Consider the following 441-residue polypeptide: 4-hydroxybenzoate polyprenyltransferase, mitochondrial (441 aa).

Residues 1–95 (MLRKLTSNSS…TLGELVLRDY (95 aa)) constitute a mitochondrion transit peptide. 8 helical membrane-spanning segments follow: residues 129–149 (IGSW…APAG), 154–174 (LWTL…GCTI), 204–224 (AWFF…ELNW), 225–245 (YSIV…LMKR), 246–266 (ITHW…LLGW), 271–291 (GSVM…WTIV), 322–342 (LWLS…GMVC), and 378–398 (FISN…GTLY). Positions 405–441 (AGKSSTTSSSSTSSSSSPSSGLLLAATNHHQPARQAS) are disordered. The span at 408 to 424 (SSTTSSSSTSSSSSPSS) shows a compositional bias: low complexity. The span at 432–441 (NHHQPARQAS) shows a compositional bias: polar residues.

It belongs to the UbiA prenyltransferase family. Requires Mg(2+) as cofactor.

The protein resides in the mitochondrion inner membrane. It catalyses the reaction an all-trans-polyprenyl diphosphate + 4-hydroxybenzoate = a 4-hydroxy-3-(all-trans-polyprenyl)benzoate + diphosphate. Its pathway is cofactor biosynthesis; ubiquinone biosynthesis. Catalyzes the prenylation of para-hydroxybenzoate (PHB) with an all-trans polyprenyl group. Mediates the second step in the final reaction sequence of coenzyme Q (CoQ) biosynthesis, which is the condensation of the polyisoprenoid side chain with PHB, generating the first membrane-bound Q intermediate. The polypeptide is 4-hydroxybenzoate polyprenyltransferase, mitochondrial (Aedes aegypti (Yellowfever mosquito)).